Consider the following 387-residue polypeptide: Migration and invasion-inhibitory protein (387 aa).

A compositionally biased stretch (polar residues) spans 50 to 59 (NLEMPLSQET). 2 disordered regions span residues 50-80 (NLEM…DPLD) and 133-172 (VSLG…SAVP). Residues 60-69 (SSASSVAPSS) show a composition bias toward low complexity. The span at 70 to 80 (QDKRHMLDPLD) shows a compositional bias: basic and acidic residues. The residue at position 307 (S307) is a Phosphoserine.

Interacts with IGFBP2.

Its function is as follows. Inhibits glioma cells invasion and down-regulates adhesion- and motility-associated genes such as NFKB2 and ICAM1. Exhibits opposing effects to IGFBP2 on cell invasion. This is Migration and invasion-inhibitory protein (Miip) from Mus musculus (Mouse).